The chain runs to 144 residues: Transcriptional regulator MraZ (144 aa).

2 SpoVT-AbrB domains span residues 5 to 47 and 76 to 121; these read EYQY…PLDR and AHKT…SQER.

This sequence belongs to the MraZ family. As to quaternary structure, forms oligomers.

The protein localises to the cytoplasm. The protein resides in the nucleoid. This is Transcriptional regulator MraZ from Thermus thermophilus (strain ATCC BAA-163 / DSM 7039 / HB27).